Here is a 99-residue protein sequence, read N- to C-terminus: Meromycolate extension acyl carrier protein (99 aa).

The Carrier domain maps to 3–81 (ATQEEIIAGL…DVVAYIQKLE (79 aa)). Position 41 is an O-(pantetheine 4'-phosphoryl)serine (Ser-41). An Isoglutamyl lysine isopeptide (Lys-Gln) (interchain with Q-Cter in protein Pup) cross-link involves residue Lys-79.

This sequence belongs to the acyl carrier protein (ACP) family. In terms of processing, 4'-phosphopantetheine is transferred from CoA to a specific serine of apo-AcpM.

Its subcellular location is the cytoplasm. In terms of biological role, acyl carrier protein involved in meromycolate extension. This chain is Meromycolate extension acyl carrier protein (acpM), found in Mycolicibacterium smegmatis (strain ATCC 700084 / mc(2)155) (Mycobacterium smegmatis).